A 1427-amino-acid polypeptide reads, in one-letter code: DNA-directed RNA polymerase subunit beta' (1427 aa).

Zn(2+) contacts are provided by Cys-70, Cys-72, Cys-85, and Cys-88. Mg(2+)-binding residues include Asp-461, Asp-463, and Asp-465. Residues Cys-809, Cys-882, Cys-889, and Cys-892 each contribute to the Zn(2+) site. Positions 1394–1427 (EAAIGDDPLGKVQGEDFTTDDVMVEERPEGASEE) are disordered. A compositionally biased stretch (basic and acidic residues) spans 1417–1427 (VEERPEGASEE).

It belongs to the RNA polymerase beta' chain family. As to quaternary structure, the RNAP catalytic core consists of 2 alpha, 1 beta, 1 beta' and 1 omega subunit. When a sigma factor is associated with the core the holoenzyme is formed, which can initiate transcription. Mg(2+) serves as cofactor. Requires Zn(2+) as cofactor.

The enzyme catalyses RNA(n) + a ribonucleoside 5'-triphosphate = RNA(n+1) + diphosphate. Functionally, DNA-dependent RNA polymerase catalyzes the transcription of DNA into RNA using the four ribonucleoside triphosphates as substrates. This chain is DNA-directed RNA polymerase subunit beta', found in Sphingopyxis alaskensis (strain DSM 13593 / LMG 18877 / RB2256) (Sphingomonas alaskensis).